Consider the following 68-residue polypeptide: Conotoxin Lt5.2 (68 aa).

The first 19 residues, 1–19 (MLCLPVFIILLLLASPAAP), serve as a signal peptide directing secretion. Residues 20 to 54 (KSLETRIQNDLIRAGLTDADLKTEKGFLSGLLNVA) constitute a propeptide that is removed on maturation.

It belongs to the conotoxin T superfamily. In terms of processing, contains 2 disulfide bonds that can be either 'C1-C3, C2-C4' or 'C1-C4, C2-C3', since these disulfide connectivities have been observed for conotoxins with cysteine framework V (for examples, see AC P0DQQ7 and AC P81755). Expressed by the venom duct.

Its subcellular location is the secreted. The polypeptide is Conotoxin Lt5.2 (Conus litteratus (Lettered cone)).